Reading from the N-terminus, the 226-residue chain is Ribonuclease 3 (226 aa).

Residues leucine 7–aspartate 129 enclose the RNase III domain. Mg(2+) is bound at residue glutamate 42. Residue aspartate 46 is part of the active site. Aspartate 115 and glutamate 118 together coordinate Mg(2+). The active site involves glutamate 118. Positions aspartate 156–glutamine 226 constitute a DRBM domain.

The protein belongs to the ribonuclease III family. As to quaternary structure, homodimer. Requires Mg(2+) as cofactor.

The protein localises to the cytoplasm. The enzyme catalyses Endonucleolytic cleavage to 5'-phosphomonoester.. Its function is as follows. Digests double-stranded RNA. Involved in the processing of primary rRNA transcript to yield the immediate precursors to the large and small rRNAs (23S and 16S). Processes some mRNAs, and tRNAs when they are encoded in the rRNA operon. Processes pre-crRNA and tracrRNA of type II CRISPR loci if present in the organism. This Shewanella amazonensis (strain ATCC BAA-1098 / SB2B) protein is Ribonuclease 3.